We begin with the raw amino-acid sequence, 230 residues long: Putative 14-3-3-like protein GF14-H (230 aa).

The protein belongs to the 14-3-3 family.

Functionally, is associated with a DNA binding complex that binds to the G box, a well-characterized cis-acting DNA regulatory element found in plant genes. The chain is Putative 14-3-3-like protein GF14-H (GF14H) from Oryza sativa subsp. japonica (Rice).